We begin with the raw amino-acid sequence, 528 residues long: MAGCRLWVSLLLAAALACLATALWPWPQYIQTYHRRYTLYPNNFQFRYHVSSAAQAGCVVLDEAFRRYRNLLFGSGSWPRPSFSNKQQTLGKNILVVSVVTAECNEFPNLESVENYTLTINDDQCLLASETVWGALRGLETFSQLVWKSAEGTFFINKTKIKDFPRFPHRGVLLDTSRHYLPLSSILDTLDVMAYNKFNVFHWHLVDDSSFPYESFTFPELTRKGSFNPVTHIYTAQDVKEVIEYARLRGIRVLAEFDTPGHTLSWGPGAPGLLTPCYSGSHLSGTFGPVNPSLNSTYDFMSTLFLEISSVFPDFYLHLGGDEVDFTCWKSNPNIQAFMKKKGFTDFKQLESFYIQTLLDIVSDYDKGYVVWQEVFDNKVKVRPDTIIQVWREEMPVEYMLEMQDITRAGFRALLSAPWYLNRVKYGPDWKDMYKVEPLAFHGTPEQKALVIGGEACMWGEYVDSTNLVPRLWPRAGAVAERLWSSNLTTNIDFAFKRLSHFRCELVRRGIQAQPISVGYCEQEFEQT.

The N-terminal stretch at 1–22 (MAGCRLWVSLLLAAALACLATA) is a signal peptide. The propeptide occupies 23–88 (LWPWPQYIQT…PRPSFSNKQQ (66 aa)). A disulfide bond links cysteine 58 and cysteine 104. Residues asparagine 115, asparagine 157, and asparagine 295 are each glycosylated (N-linked (GlcNAc...) asparagine). A disulfide bridge links cysteine 277 with cysteine 328. Glutamate 323 (proton donor) is an active-site residue. The critical for hydrolysis GM2 gangliosides stretch occupies residues 422 to 423 (NR). Asparagine 487 carries an N-linked (GlcNAc...) asparagine glycan. Cysteine 504 and cysteine 521 are disulfide-bonded.

It belongs to the glycosyl hydrolase 20 family. There are 3 beta-hexosaminidase isozymes: isozyme A (hexosaminidase A) is a heterodimer composed of one subunit alpha and one subunit beta (chain A and B); isozyme B (hexosaminidase B) is a homodimer of two beta subunits (two chains A and B); isozyme S (hexosaminidase S) is a homodimer of two alpha subunits. The composition of the dimer (isozyme A versus isozyme S) has a significant effect on the substrate specificity of the alpha subunit active site. Ubiquitous. Most abundant in testis, adrenal, epididymis and heart. Low levels seen in the liver.

It is found in the lysosome. The catalysed reaction is Hydrolysis of terminal non-reducing N-acetyl-D-hexosamine residues in N-acetyl-beta-D-hexosaminides.. It catalyses the reaction N-acetyl-beta-D-galactosaminyl-(1-&gt;4)-beta-D-3-sulfogalactosyl-(1-&gt;4)-beta-D-glucosyl-(1&lt;-&gt;1')-ceramide + H2O = a beta-D-3-sulfogalactosyl-(1-&gt;4)-beta-D-glucosyl-(1&lt;-&gt;1')-ceramide + N-acetyl-beta-D-galactosamine. The enzyme catalyses a ganglioside GM2 (d18:1(4E)) + H2O = a ganglioside GM3 (d18:1(4E)) + N-acetyl-beta-D-galactosamine. It carries out the reaction a ganglioside GM2 + H2O = a ganglioside GM3 + N-acetyl-beta-D-galactosamine. The catalysed reaction is beta-D-GalNAc-(1-&gt;4)-alpha-L-IdoA-(1-&gt;3)-beta-D-GalNAc-4-sulfate-(1-&gt;4)-alpha-L-IdoA-(1-&gt;3)-D-GalNAc-4-sulfate + H2O = alpha-L-IdoA-(1-&gt;3)-beta-D-GalNAc-4-sulfate-(1-&gt;4)-alpha-L-IdoA-(1-&gt;3)-D-GalNAc-4-sulfate + N-acetyl-D-galactosamine. It catalyses the reaction N-acetyl-beta-D-6-sulfogalactosaminyl-(1-&gt;4)-alpha-L-iduronyl-(1-&gt;3)-N-acetyl-D-6-sulfogalactosamine + H2O = alpha-L-iduronyl-(1-&gt;3)-N-acetyl-D-6-sulfogalactosamine + N-acetyl-D-6-sulfogalactosamine. Addition of GM2A stimulates the hydrolysis of sulfated glycosphingolipid SM2 and the ganglioside GM2. In terms of biological role, hydrolyzes the non-reducing end N-acetyl-D-hexosamine and/or sulfated N-acetyl-D-hexosamine of glycoconjugates, such as the oligosaccharide moieties from proteins and neutral glycolipids, or from certain mucopolysaccharides. The isozyme S is as active as the isozyme A on the anionic bis-sulfated glycans, the chondroitin-6-sulfate trisaccharide (C6S-3), and the dermatan sulfate pentasaccharide, and the sulfated glycosphingolipid SM2. The isozyme B does not hydrolyze each of these substrates, however hydrolyzes efficiently neutral oligosaccharide. Only the isozyme A is responsible for the degradation of GM2 gangliosides in the presence of GM2A. This chain is Beta-hexosaminidase subunit alpha, found in Mus musculus (Mouse).